The following is a 274-amino-acid chain: Elongation factor Ts (274 aa).

The interval 82–85 (TDFV) is involved in Mg(2+) ion dislocation from EF-Tu.

The protein belongs to the EF-Ts family.

It is found in the cytoplasm. Functionally, associates with the EF-Tu.GDP complex and induces the exchange of GDP to GTP. It remains bound to the aminoacyl-tRNA.EF-Tu.GTP complex up to the GTP hydrolysis stage on the ribosome. This Christiangramia forsetii (strain DSM 17595 / CGMCC 1.15422 / KT0803) (Gramella forsetii) protein is Elongation factor Ts.